We begin with the raw amino-acid sequence, 729 residues long: Catalase-peroxidase (729 aa).

The segment at 1–33 (MSAHNTNESAVGKCPFHEQKEEKSVLARGAGGG) is disordered. Over residues 15–25 (PFHEQKEEKSV) the composition is skewed to basic and acidic residues. A cross-link (tryptophyl-tyrosyl-methioninium (Trp-Tyr) (with M-255)) is located at residues 108–229 (WHSAGTYRTV…LGATEMGLIY (122 aa)). H109 functions as the Proton acceptor in the catalytic mechanism. The segment at residues 229–255 (YVNPEGPEASGNPASAAPAIRATFGNM) is a cross-link (tryptophyl-tyrosyl-methioninium (Tyr-Met) (with W-108)). H270 is a binding site for heme b.

Belongs to the peroxidase family. Peroxidase/catalase subfamily. Homodimer or homotetramer. Heme b serves as cofactor. In terms of processing, formation of the three residue Trp-Tyr-Met cross-link is important for the catalase, but not the peroxidase activity of the enzyme.

The enzyme catalyses H2O2 + AH2 = A + 2 H2O. The catalysed reaction is 2 H2O2 = O2 + 2 H2O. In terms of biological role, bifunctional enzyme with both catalase and broad-spectrum peroxidase activity. This Erwinia tasmaniensis (strain DSM 17950 / CFBP 7177 / CIP 109463 / NCPPB 4357 / Et1/99) protein is Catalase-peroxidase.